We begin with the raw amino-acid sequence, 158 residues long: MRSDLTAFLMMQYKNNQSVLVVIYTKDTNRVLMLQRQDDPDFWQSVTGTIESDETPKKTAIRELWEEVRLDISENSTALFDCNESIEFEIFPHFRYKYAPNITHCKEHWFLCEVEKEFIPVLSEHLDFCWVSAKKAVEMTKSQNNAEAIKKYLFNLRR.

Substrate is bound by residues K14, R36, and T47. Residues 14 to 153 enclose the Nudix hydrolase domain; the sequence is KNNQSVLVVI…NNAEAIKKYL (140 aa). A Nudix box motif is present at residues 48 to 69; that stretch reads GTIESDETPKKTAIRELWEEVR. Residues E63 and E67 each contribute to the Mg(2+) site. Position 88 to 91 (88 to 91) interacts with substrate; that stretch reads FEIF. Mg(2+) is bound at residue E124. S142 serves as a coordination point for substrate.

This sequence belongs to the Nudix hydrolase family. Mg(2+) serves as cofactor.

It carries out the reaction 7,8-dihydroneopterin 3'-triphosphate + H2O = 7,8-dihydroneopterin 3'-phosphate + diphosphate + H(+). In terms of biological role, catalyzes the hydrolysis of dihydroneopterin triphosphate to dihydroneopterin monophosphate and pyrophosphate. Required for efficient folate biosynthesis. Can also hydrolyze nucleoside triphosphates with a preference for dATP. The protein is Dihydroneopterin triphosphate diphosphatase (nudB) of Haemophilus influenzae (strain ATCC 51907 / DSM 11121 / KW20 / Rd).